Consider the following 286-residue polypeptide: Putative short-chain type dehydrogenase/reductase Rv0148 (286 aa).

Position 11-35 (11-35 (VTGAGGGLGREYALTLAGEGASVVV)) interacts with NAD(+). S151 contacts substrate. The active-site Proton acceptor is the Y164. Residue K280 forms an Isoglutamyl lysine isopeptide (Lys-Gln) (interchain with Q-Cter in protein Pup) linkage.

It belongs to the short-chain dehydrogenases/reductases (SDR) family. Pupylated at Lys-280 by the prokaryotic ubiquitin-like protein Pup, which probably leads to its degradation by the proteasome.

The sequence is that of Putative short-chain type dehydrogenase/reductase Rv0148 from Mycobacterium tuberculosis (strain ATCC 25618 / H37Rv).